The following is a 143-amino-acid chain: Transcriptional regulator MraZ (143 aa).

SpoVT-AbrB domains are found at residues 5 to 47 (EYSH…PMPV) and 76 to 119 (AMEA…SDEN).

The protein belongs to the MraZ family. As to quaternary structure, forms oligomers.

The protein localises to the cytoplasm. It is found in the nucleoid. In Leuconostoc citreum (strain KM20), this protein is Transcriptional regulator MraZ.